Here is a 149-residue protein sequence, read N- to C-terminus: Cytochrome c-type biogenesis protein CcmE (149 aa).

Residues 1 to 8 are Cytoplasmic-facing; that stretch reads MNPKRKQR. Residues 9–29 traverse the membrane as a helical; Signal-anchor for type II membrane protein segment; sequence LIIVSFLVIGVSATVGLIMAA. Topologically, residues 30 to 149 are periplasmic; it reads LSSNVNHFYN…AQDAAPAQTY (120 aa). Histidine 124 and tyrosine 128 together coordinate heme.

It belongs to the CcmE/CycJ family.

The protein localises to the cell inner membrane. Its function is as follows. Heme chaperone required for the biogenesis of c-type cytochromes. Transiently binds heme delivered by CcmC and transfers the heme to apo-cytochromes in a process facilitated by CcmF and CcmH. The protein is Cytochrome c-type biogenesis protein CcmE of Hahella chejuensis (strain KCTC 2396).